Here is a 358-residue protein sequence, read N- to C-terminus: Cytoplasmic tRNA 2-thiolation protein 1 (358 aa).

Belongs to the TtcA family. CTU1/NCS6/ATPBD3 subfamily.

It localises to the cytoplasm. It functions in the pathway tRNA modification; 5-methoxycarbonylmethyl-2-thiouridine-tRNA biosynthesis. Plays a central role in 2-thiolation of mcm(5)S(2)U at tRNA wobble positions of tRNA(Lys), tRNA(Glu) and tRNA(Gln). Directly binds tRNAs and probably acts by catalyzing adenylation of tRNAs, an intermediate required for 2-thiolation. It is unclear whether it acts as a sulfurtransferase that transfers sulfur from thiocarboxylated URM1 onto the uridine of tRNAs at wobble position. Prior mcm(5) tRNA modification by the elongator complex is required for 2-thiolation. May also be involved in protein urmylation. The protein is Cytoplasmic tRNA 2-thiolation protein 1 of Candida glabrata (strain ATCC 2001 / BCRC 20586 / JCM 3761 / NBRC 0622 / NRRL Y-65 / CBS 138) (Yeast).